Consider the following 122-residue polypeptide: Small ribosomal subunit protein uS13 (122 aa).

The tract at residues 97 to 122 is disordered; it reads PVRGQRTHTNARTRKGPAKAIAGKKK.

Belongs to the universal ribosomal protein uS13 family. Part of the 30S ribosomal subunit. Forms a loose heterodimer with protein S19. Forms two bridges to the 50S subunit in the 70S ribosome.

Functionally, located at the top of the head of the 30S subunit, it contacts several helices of the 16S rRNA. In the 70S ribosome it contacts the 23S rRNA (bridge B1a) and protein L5 of the 50S subunit (bridge B1b), connecting the 2 subunits; these bridges are implicated in subunit movement. Contacts the tRNAs in the A and P-sites. This chain is Small ribosomal subunit protein uS13, found in Bartonella tribocorum (strain CIP 105476 / IBS 506).